We begin with the raw amino-acid sequence, 668 residues long: RNA-binding protein PIN4 (668 aa).

The segment at 1 to 77 (METSSFENAP…NLNNAPTNGA (77 aa)) is disordered. The segment covering 8–23 (NAPPAAINDAQDNNIN) has biased composition (low complexity). Residues 24-36 (TETNDQETNQQSI) show a composition bias toward polar residues. The segment covering 37–46 (ETRDAIDKEN) has biased composition (basic and acidic residues). Polar residues predominate over residues 47–74 (GVQTETGENSAKNAEQNVSSTNLNNAPT). At serine 56 the chain carries Phosphoserine. In terms of domain architecture, RRM spans 85-163 (NAIVIKNIPF…RKLKVEYKKM (79 aa)). A compositionally biased stretch (basic and acidic residues) spans 168–188 (ERERIEREKREKRGQLEEQHR). The disordered stretch occupies residues 168–214 (ERERIEREKREKRGQLEEQHRSSSNLSLDSLSKMSGSGNNNTSNNQL). 4 positions are modified to phosphoserine: serine 189, serine 191, serine 194, and serine 197. Residues 189–212 (SSSNLSLDSLSKMSGSGNNNTSNN) are compositionally biased toward low complexity. Threonine 305 carries the post-translational modification Phosphothreonine. Disordered regions lie at residues 374 to 398 (QQQG…NRSQ) and 420 to 570 (VNNS…QRVP). Serine 393 is modified (phosphoserine). A compositionally biased stretch (low complexity) spans 420-449 (VNNSSNSNTINSNNGNGNNVIINNNSASST). The span at 450 to 478 (PKISSQGQFSMQPTLTSPKMNIHHSSQYN) shows a compositional bias: polar residues. Residue serine 466 is modified to Phosphoserine. The segment covering 479–508 (SADQPQQPQPQTQQNVQSAAQQQQSFLRQQ) has biased composition (low complexity). Over residues 509 to 551 (ATLTPSSRIPSGYSANHYQINSVNPLLRNSQISPPNSQIPINS) the composition is skewed to polar residues. Serine 541 carries the post-translational modification Phosphoserine. The span at 552-567 (QTLSQAQPPAQSQTQQ) shows a compositional bias: low complexity. A phosphoserine mark is found at serine 636, serine 638, serine 640, serine 653, and serine 655.

As to quaternary structure, interacts with RAD53. Hyperphosphorylated in response to DNA damage by MEC1.

The protein resides in the cytoplasm. Involved in normal G2/M phase transition of the mitotic cell cycle. In association with RAD53, also involved in checkpoint control in response to DNA damage. The sequence is that of RNA-binding protein PIN4 (PIN4) from Saccharomyces cerevisiae (strain ATCC 204508 / S288c) (Baker's yeast).